A 549-amino-acid chain; its full sequence is Nectin-3 (549 aa).

Positions 1-57 are cleaved as a signal peptide; it reads MARTPGPAPLCPGGGKAQLSSAFPPAAGLLLPAPTPPPLLLLLIPLLLFSRLCGALA. The Ig-like V-type domain occupies 58–165; it reads GSIIVEPHVT…GNAQSSTTVT (108 aa). Residues 58-404 lie on the Extracellular side of the membrane; sequence GSIIVEPHVT…ATLKDDTIGT (347 aa). N-linked (GlcNAc...) asparagine glycosylation is found at N73, N83, N125, N186, N222, and N331. C78 and C148 form a disulfide bridge. 2 Ig-like C2-type domains span residues 170-258 and 269-354; these read PTVS…KDIR and PEVS…KVIY. 2 disulfides stabilise this stretch: C193/C246 and C291/C338. Residues 405–425 form a helical membrane-spanning segment; it reads IIASVVGGALFLVLVSILAGV. Residues 426-549 are Cytoplasmic-facing; sequence FCYRRRRTFR…SVISRREWYV (124 aa).

It belongs to the nectin family. As to quaternary structure, cis- and trans-homodimer. Can form trans-heterodimers with NECTIN1, NECTIN2, PVR, IGSF4B/Necl-1 and with IGSF4. Interaction between NECTIN1 and NECTIN3 on the pre- and postsynaptic sites, respectively, initiates the formation of puncta adherentia junctions between axons and dendrites. Interacts (via Cytoplasmic domain) with AFDN, providing a connection with the actin cytoskeleton. Binds with low affinity to TIGIT. Ubiquitous with high expression in testes. Localized in spermatids at Sertoli-spermatid junctions. Expressed in ovarian granulosa cells, but only faintly expressed after ovulation.

It localises to the cell membrane. Its subcellular location is the postsynaptic cell membrane. It is found in the cell junction. The protein localises to the adherens junction. Functionally, cell adhesion molecule that promotes cell-cell adhesion through heterophilic trans-interactions with nectins-like or other nectins, such as trans-interaction with NECTIN2 at Sertoli-spermatid junctions. Trans-interaction with PVR induces activation of CDC42 and RAC small G proteins through common signaling molecules such as SRC and RAP1. Induces endocytosis-mediated down-regulation of PVR from the cell surface, resulting in reduction of cell movement and proliferation. Involved in axon guidance by promoting contacts between the commissural axons and the floor plate cells. Also involved in the formation of cell-cell junctions, including adherens junctions and synapses. Promotes formation of checkerboard-like cellular pattern of hair cells and supporting cells in the auditory epithelium via heterophilic interaction with NECTIN1: NECTIN1 is present in the membrane of hair cells and associates with NECTIN3 on supporting cells, thereby mediating heterotypic adhesion between these two cell types. Plays a role in the morphology of the ciliary body. The polypeptide is Nectin-3 (Mus musculus (Mouse)).